A 152-amino-acid chain; its full sequence is Perlwapin (152 aa).

A signal peptide spans 1 to 18; the sequence is LILCVVVCTAAVLGTAAG. Positions 19–61 constitute a WAP 1 domain; that stretch reads YESQLPGCPPGAYPAICARYCYSDRDCASGYYCCNTGCLNICV. Cystine bridges form between Cys-26–Cys-52, Cys-35–Cys-56, Cys-39–Cys-51, Cys-45–Cys-60, Cys-69–Cys-95, Cys-77–Cys-100, Cys-82–Cys-94, Cys-88–Cys-103, Cys-112–Cys-139, Cys-122–Cys-142, Cys-126–Cys-138, and Cys-132–Cys-146. Positions 62 to 107 constitute a WAP 2; atypical domain; sequence PKPKPGLCPSITQSPCRGNVCNNDQDCPGNRKCCGKPGCKRCYRPK. Residues 108 to 150 enclose the WAP 3 domain; sequence KPGSCPARKYEAGPCVVYCDGDFDCPGDKKCCGGCPRLCEKPC.

In terms of tissue distribution, component of the acid-soluble and acid-insoluble organic matrix of prismatic shell layers (at protein level).

Its subcellular location is the secreted. Functionally, inhibits growth of calcium carbonate crystals. May inhibit growth of certain crystallographic planes in the mineral phase of nacre in the shell. The chain is Perlwapin from Haliotis asinina (Donkey's ear abalone).